A 249-amino-acid chain; its full sequence is MASRRMETKPVITCLKTLLIIYSFVFWITGVILLAVGVWGKLTLGTYISLIAENSTNAPYVLIGTGTTIVVFGLFGCFATCRGSPWMLKLYAMFLSLVFLAELVAGISGFVFRHEIKDTFLRTYTDAMQNYNGNDERSRAVDHVQRSLSCCGVQNYTNWSSSPYFLDHGIPPSCCMNETDCNPLDLHNLTVAATKVNQKGCYDLVTSFMETNMGIIAGVAFGIAFSQLIGMLLACCLSRFITANQYEMV.

At 1 to 16 (MASRRMETKPVITCLK) the chain is on the cytoplasmic side. The chain crosses the membrane as a helical span at residues 17–40 (TLLIIYSFVFWITGVILLAVGVWG). Residues 41–56 (KLTLGTYISLIAENST) are Extracellular-facing. N-linked (GlcNAc...) asparagine glycosylation is present at Asn54. A helical transmembrane segment spans residues 57–75 (NAPYVLIGTGTTIVVFGLF). Over 76–86 (GCFATCRGSPW) the chain is Cytoplasmic. A helical transmembrane segment spans residues 87 to 112 (MLKLYAMFLSLVFLAELVAGISGFVF). Residues 113–213 (RHEIKDTFLR…LVTSFMETNM (101 aa)) are Extracellular-facing. N-linked (GlcNAc...) asparagine glycosylation is found at Asn155, Asn158, Asn177, and Asn188. A helical membrane pass occupies residues 214 to 234 (GIIAGVAFGIAFSQLIGMLLA). Topologically, residues 235–249 (CCLSRFITANQYEMV) are cytoplasmic.

Belongs to the tetraspanin (TM4SF) family.

It localises to the membrane. Functionally, may be involved in cell proliferation and cell motility. This Mus musculus (Mouse) protein is Tetraspanin-7 (Tspan7).